The sequence spans 129 residues: Profilin-4 (129 aa).

Belongs to the profilin family.

It localises to the cytoplasm. Involved in male fertility. Required for manchette development and acrosome biogenesis during spermiogenesis. Binds in vitro to phospholipids, including phosphatidylinositol 3-phosphate (PtdIns(3)P), phosphatidylinositol 4,5-bisphosphate (PtdIns(4,5)P2), phosphatidylinositol 4-phosphate (PtdIns(4)P) and phosphatidic acid (PA). Contrary to other profilin family members, does not bind to actin in vitro. The protein is Profilin-4 (PFN4) of Bos taurus (Bovine).